The chain runs to 462 residues: Bifunctional protein GlmU (462 aa).

The tract at residues 1–235 is pyrophosphorylase; that stretch reads MSYINFSAII…TFEIMGVNSK (235 aa). UDP-N-acetyl-alpha-D-glucosamine is bound by residues 11 to 14, K25, Q80, 85 to 86, 107 to 109, G144, E159, and N233; these read LAAG, GT, and YGD. D109 is a binding site for Mg(2+). N233 is a binding site for Mg(2+). Residues 236-256 form a linker region; sequence SDFVDLDKQYQQRKVQCLLSS. The interval 257–462 is N-acetyltransferase; that stretch reads GLMIIDPNRF…LNWKRLKNKK (206 aa). UDP-N-acetyl-alpha-D-glucosamine is bound by residues R339 and K357. The active-site Proton acceptor is the H369. The UDP-N-acetyl-alpha-D-glucosamine site is built by Y372 and N383. Acetyl-CoA contacts are provided by residues A386, 392-393, A429, and R446; that span reads NY.

This sequence in the N-terminal section; belongs to the N-acetylglucosamine-1-phosphate uridyltransferase family. It in the C-terminal section; belongs to the transferase hexapeptide repeat family. In terms of assembly, homotrimer. Mg(2+) serves as cofactor.

The protein localises to the cytoplasm. It carries out the reaction alpha-D-glucosamine 1-phosphate + acetyl-CoA = N-acetyl-alpha-D-glucosamine 1-phosphate + CoA + H(+). The enzyme catalyses N-acetyl-alpha-D-glucosamine 1-phosphate + UTP + H(+) = UDP-N-acetyl-alpha-D-glucosamine + diphosphate. It participates in nucleotide-sugar biosynthesis; UDP-N-acetyl-alpha-D-glucosamine biosynthesis; N-acetyl-alpha-D-glucosamine 1-phosphate from alpha-D-glucosamine 6-phosphate (route II): step 2/2. The protein operates within nucleotide-sugar biosynthesis; UDP-N-acetyl-alpha-D-glucosamine biosynthesis; UDP-N-acetyl-alpha-D-glucosamine from N-acetyl-alpha-D-glucosamine 1-phosphate: step 1/1. Its pathway is bacterial outer membrane biogenesis; LPS lipid A biosynthesis. Catalyzes the last two sequential reactions in the de novo biosynthetic pathway for UDP-N-acetylglucosamine (UDP-GlcNAc). The C-terminal domain catalyzes the transfer of acetyl group from acetyl coenzyme A to glucosamine-1-phosphate (GlcN-1-P) to produce N-acetylglucosamine-1-phosphate (GlcNAc-1-P), which is converted into UDP-GlcNAc by the transfer of uridine 5-monophosphate (from uridine 5-triphosphate), a reaction catalyzed by the N-terminal domain. In Blochmanniella pennsylvanica (strain BPEN), this protein is Bifunctional protein GlmU.